A 188-amino-acid chain; its full sequence is Pyridoxal 5'-phosphate synthase subunit PdxT (188 aa).

Residue 46-48 (GES) participates in L-glutamine binding. Cysteine 78 functions as the Nucleophile in the catalytic mechanism. Residues arginine 105 and 133–134 (IR) contribute to the L-glutamine site. Active-site charge relay system residues include histidine 169 and glutamate 171.

The protein belongs to the glutaminase PdxT/SNO family. In terms of assembly, in the presence of PdxS, forms a dodecamer of heterodimers. Only shows activity in the heterodimer.

It carries out the reaction aldehydo-D-ribose 5-phosphate + D-glyceraldehyde 3-phosphate + L-glutamine = pyridoxal 5'-phosphate + L-glutamate + phosphate + 3 H2O + H(+). It catalyses the reaction L-glutamine + H2O = L-glutamate + NH4(+). Its pathway is cofactor biosynthesis; pyridoxal 5'-phosphate biosynthesis. Functionally, catalyzes the hydrolysis of glutamine to glutamate and ammonia as part of the biosynthesis of pyridoxal 5'-phosphate. The resulting ammonia molecule is channeled to the active site of PdxS. In Thermosipho africanus (strain TCF52B), this protein is Pyridoxal 5'-phosphate synthase subunit PdxT.